The following is a 397-amino-acid chain: Protein-glutamate methylesterase/protein-glutamine glutaminase of group 2 operon (397 aa).

The 119-residue stretch at 21–139 (RVMIVDDSVV…EASAADTFHH (119 aa)) folds into the Response regulatory domain. 4-aspartylphosphate is present on aspartate 72. The CheB-type methylesterase domain maps to 199–388 (PFSTLAPKVL…LPLNQIGAKV (190 aa)). Active-site residues include serine 213, histidine 241, and aspartate 337.

It belongs to the CheB family. Post-translationally, phosphorylated by CheA. Phosphorylation of the N-terminal regulatory domain activates the methylesterase activity.

The protein localises to the cytoplasm. It catalyses the reaction [protein]-L-glutamate 5-O-methyl ester + H2O = L-glutamyl-[protein] + methanol + H(+). The catalysed reaction is L-glutaminyl-[protein] + H2O = L-glutamyl-[protein] + NH4(+). Its function is as follows. Involved in chemotaxis. Part of a chemotaxis signal transduction system that modulates chemotaxis in response to various stimuli. Catalyzes the demethylation of specific methylglutamate residues introduced into the chemoreceptors (methyl-accepting chemotaxis proteins or MCP) by CheR. Also mediates the irreversible deamidation of specific glutamine residues to glutamic acid. The sequence is that of Protein-glutamate methylesterase/protein-glutamine glutaminase of group 2 operon from Bradyrhizobium diazoefficiens (strain JCM 10833 / BCRC 13528 / IAM 13628 / NBRC 14792 / USDA 110).